We begin with the raw amino-acid sequence, 846 residues long: Exonuclease 1 (846 aa).

An N-domain region spans residues 1 to 99 (MGIQGLLQFI…RSRRERRQAN (99 aa)). Positions 30, 78, 150, 152, 171, 173, 225, and 270 each coordinate Mg(2+). Residues 129-387 (MAHKVIKAAR…RPESGTVSDA (259 aa)) form an interaction with MSH3 region. The interval 138 to 229 (RSQGVDCLVA…ILSGCDYLSS (92 aa)) is I-domain. Positions 372–396 (HRNYSPRPESGTVSDAPQLKENPST) are disordered. Residue Ser376 is modified to Phosphoserine. Over residues 382–396 (GTVSDAPQLKENPST) the composition is skewed to polar residues. The segment at 388 to 490 (PQLKENPSTV…NKFATFLQRK (103 aa)) is interaction with MLH1. The short motif at 418–421 (KRPR) is the Nuclear localization signal element. Ser422 and Ser454 each carry phosphoserine. Position 482 is an N6-acetyllysine (Lys482). Thr581 carries the post-translational modification Phosphothreonine. Phosphoserine is present on residues Ser598 and Ser610. Residues 600-846 (PTLGTLRSCF…CGRVQRAIFQ (247 aa)) form an interaction with MSH2 region. The tract at residues 618-781 (FSRTPSPSPS…SIQKRKHHNA (164 aa)) is disordered. Polar residues-rich tracts occupy residues 620-631 (RTPSPSPSTALQ) and 639-654 (SPTS…VSQL). Thr621 carries the phosphothreonine modification. A phosphoserine mark is found at Ser623, Ser639, Ser660, and Ser674. Over residues 655–671 (KSEESSDDESHPLREEA) the composition is skewed to basic and acidic residues. 3 stretches are compositionally biased toward polar residues: residues 672-689 (CSSQ…SSNA), 713-722 (DSQSDQTSKL), and 743-754 (KSSSADSLSTTK). A Phosphoserine; by ATR modification is found at Ser714. Ser746 is modified (phosphoserine). The tract at residues 787–846 (LQIKLNELWKNFGFKKDSEKLPPCKKPLSPVRDNIQLTPEAEEDIFNKPECGRVQRAIFQ) is interaction with MLH1.

This sequence belongs to the XPG/RAD2 endonuclease family. EXO1 subfamily. Interacts with the MLH1-PMS2 heterodimer via MLH1. Interacts with MSH3. Interacts with the MSH2-MSH6 heterodimer via MSH2, and this interaction may increase the processivity of the 5'-&gt;3' exonuclease activity. Interacts with PCNA, and this interaction may both stimulate the cryptic 3'-&gt;5' exonuclease activity and suppress the 5'-&gt;3' exonuclease activity. Interacts with WRN, and this interaction stimulates both the 5'-&gt;3' exonuclease activity and cleavage of 5'-overhanging flap structures. Interacts with RECQL/RECQ1, and this interaction stimulates cleavage of 5'-overhanging flap structures. Interacts with DNA helicase ZGRF1; the interaction is increased following DNA damage induction. The cofactor is Mg(2+). In terms of processing, phosphorylated upon DNA damage and in response to agents stalling DNA replication, probably by ATM or ATR. Phosphorylation at Ser-454, Thr-621 and Ser-714 is induced upon DNA-damage caused by treatment with hydroxyurea (HU) but not upon IR treatment. The HU-induced EXO1 triple phosphorylation facilitates destabilization/degradation of the protein. Highly expressed in bone marrow, testis and thymus. Expressed at lower levels in colon, lymph nodes, ovary, placenta, prostate, small intestine, spleen and stomach.

The protein resides in the nucleus. Its function is as follows. 5'-&gt;3' double-stranded DNA exonuclease which may also possess a cryptic 3'-&gt;5' double-stranded DNA exonuclease activity. Functions in DNA mismatch repair (MMR) to excise mismatch-containing DNA tracts directed by strand breaks located either 5' or 3' to the mismatch. Also exhibits endonuclease activity against 5'-overhanging flap structures similar to those generated by displacement synthesis when DNA polymerase encounters the 5'-end of a downstream Okazaki fragment. Required for somatic hypermutation (SHM) and class switch recombination (CSR) of immunoglobulin genes. Essential for male and female meiosis. In Homo sapiens (Human), this protein is Exonuclease 1 (EXO1).